The following is a 117-amino-acid chain: Ribonuclease P protein component (117 aa).

The protein belongs to the RnpA family. In terms of assembly, consists of a catalytic RNA component (M1 or rnpB) and a protein subunit.

It catalyses the reaction Endonucleolytic cleavage of RNA, removing 5'-extranucleotides from tRNA precursor.. Functionally, RNaseP catalyzes the removal of the 5'-leader sequence from pre-tRNA to produce the mature 5'-terminus. It can also cleave other RNA substrates such as 4.5S RNA. The protein component plays an auxiliary but essential role in vivo by binding to the 5'-leader sequence and broadening the substrate specificity of the ribozyme. The protein is Ribonuclease P protein component of Aliivibrio fischeri (strain ATCC 700601 / ES114) (Vibrio fischeri).